Here is a 325-residue protein sequence, read N- to C-terminus: Putative gluconeogenesis factor (325 aa).

It belongs to the gluconeogenesis factor family.

The protein localises to the cytoplasm. Required for morphogenesis under gluconeogenic growth conditions. The sequence is that of Putative gluconeogenesis factor from Streptococcus pyogenes serotype M3 (strain ATCC BAA-595 / MGAS315).